The following is a 193-amino-acid chain: Outer membrane lipoprotein DolP (193 aa).

A signal peptide spans 1–21 (MTLSPLKKLAILLGATIFLQG). Cysteine 22 carries N-palmitoyl cysteine lipidation. The S-diacylglycerol cysteine moiety is linked to residue cysteine 22. BON domains follow at residues 48–117 (DDET…TVSP) and 126–193 (KDSW…KYLD).

This sequence belongs to the lipoprotein DolP family.

The protein resides in the cell outer membrane. Functionally, plays an important role in maintaining outer membrane integrity. The polypeptide is Outer membrane lipoprotein DolP (Haemophilus influenzae (strain ATCC 51907 / DSM 11121 / KW20 / Rd)).